Consider the following 216-residue polypeptide: N-glycosylase/DNA lyase (216 aa).

Gln-27, Ser-48, and Trp-59 together coordinate 8-oxoguanine. The segment at 106-170 is helix-hairpin-helix; the sequence is EHYYENMVAL…LDYRLKKINP (65 aa). Catalysis depends on Lys-130, which acts as the Schiff-base intermediate with DNA. 2 residues coordinate 8-oxoguanine: Phe-134 and Pro-160. Asp-162 is an active-site residue. Residues Asp-190 and Trp-194 each coordinate 8-oxoguanine.

The protein belongs to the archaeal N-glycosylase/DNA lyase (AGOG) family.

The enzyme catalyses 2'-deoxyribonucleotide-(2'-deoxyribose 5'-phosphate)-2'-deoxyribonucleotide-DNA = a 3'-end 2'-deoxyribonucleotide-(2,3-dehydro-2,3-deoxyribose 5'-phosphate)-DNA + a 5'-end 5'-phospho-2'-deoxyribonucleoside-DNA + H(+). Functionally, DNA repair enzyme that is part of the base excision repair (BER) pathway; protects from oxidative damage by removing the major product of DNA oxidation, 8-oxoguanine (GO), from single- and double-stranded DNA substrates. The chain is N-glycosylase/DNA lyase from Nanoarchaeum equitans (strain Kin4-M).